Consider the following 102-residue polypeptide: Carboxysome shell protein CcmK2 (102 aa).

Residues 4–90 (AVGMIETLGF…PHENLEYVLP (87 aa)) enclose the BMC domain.

This sequence belongs to the bacterial microcompartments protein family. CcmK subfamily. Homohexamer. Interacts with CcmO in the carboxysome. Interacts with CcmN.

The protein resides in the carboxysome. Functionally, one of the shell proteins of the carboxysome, a polyhedral inclusion where RuBisCO (ribulose bisphosphate carboxylase, rbcL-rbcS) is sequestered. Assembles into hexamers which make sheets that form the facets of the polyhedral carboxysome. The hexamer central pore probably regulates metabolite flux. Its function is as follows. The major shell protein of the carboxysome, a polyhedral inclusion where RuBisCO (ribulose bisphosphate carboxylase, rbcL-rbcS) is sequestered. Hexamers make sheets that form the facets of the polyhedral carboxysome. The shell is 4.5 nm thick, as observed for CcmK hexamers. Required for recruitment of CcmO to the pre-carboxysome. In PCC 7942 there are several CcmK paralogs with presumably functional differences; replacing the central pore residues (34-37) with those of either CcmK4 from this organism (Tyr-Met-Arg-Ala) or from an alpha-type carboxysome forming cyanobacterium (CsoS1 of P.marinus strain MIT 9313, Arg-Glu-Phe-Val) allows the bacterium to make carboxysomes, but the expression level is too low to know if the carboxysome is functional for CO(2) fixation. In terms of biological role, beta-carboxysome assembly initiates when soluble RuBisCO is condensed into a liquid matrix in a pre-carboxysome by the RbcS-like domains of probably both CcmM58 and CcmM35. CcmN interacts with the N-terminus of CcmM58, and then recruits the CcmK2 major shell protein via CcmN's encapsulation peptide. Shell formation requires CcmK proteins and CcmO. CcmL caps the otherwise elongated carboxysome. Once fully encapsulated carboxysomes are formed, they migrate within the cell probably via interactions with the cytoskeleton. This is Carboxysome shell protein CcmK2 from Synechococcus elongatus (strain ATCC 33912 / PCC 7942 / FACHB-805) (Anacystis nidulans R2).